We begin with the raw amino-acid sequence, 108 residues long: UPF0102 protein Sbal_4100 (108 aa).

It belongs to the UPF0102 family.

The polypeptide is UPF0102 protein Sbal_4100 (Shewanella baltica (strain OS155 / ATCC BAA-1091)).